Here is a 415-residue protein sequence, read N- to C-terminus: DNA polymerase IV (415 aa).

The 182-residue stretch at 15–196 (ILHVDMNCFF…LPVGAMHGIG (182 aa)) folds into the UmuC domain. 2 residues coordinate Mg(2+): Asp19 and Asp115. The active site involves Glu116. Positions 238-260 (KGMDDRQVDPSQMGQHKSVGNSM) are disordered. Residues 246–260 (DPSQMGQHKSVGNSM) are compositionally biased toward polar residues.

Belongs to the DNA polymerase type-Y family. Monomer. The cofactor is Mg(2+).

The protein resides in the cytoplasm. It catalyses the reaction DNA(n) + a 2'-deoxyribonucleoside 5'-triphosphate = DNA(n+1) + diphosphate. Poorly processive, error-prone DNA polymerase involved in untargeted mutagenesis. Copies undamaged DNA at stalled replication forks, which arise in vivo from mismatched or misaligned primer ends. These misaligned primers can be extended by PolIV. Exhibits no 3'-5' exonuclease (proofreading) activity. May be involved in translesional synthesis, in conjunction with the beta clamp from PolIII. The polypeptide is DNA polymerase IV (Bacillus cereus (strain ZK / E33L)).